A 322-amino-acid polypeptide reads, in one-letter code: Cytochrome f (322 aa).

The first 35 residues, 1 to 35 (MQTRNTFSWTWIREEITRSISVSLMIYIITWSSIS), serve as a signal peptide directing secretion. Heme-binding residues include Tyr-38, Cys-58, Cys-61, and His-62. The chain crosses the membrane as a helical span at residues 288–308 (VQGLLFFLGSVVLAQIFLVLK).

Belongs to the cytochrome f family. In terms of assembly, the 4 large subunits of the cytochrome b6-f complex are cytochrome b6, subunit IV (17 kDa polypeptide, petD), cytochrome f and the Rieske protein, while the 4 small subunits are PetG, PetL, PetM and PetN. The complex functions as a dimer. The cofactor is heme.

It is found in the plastid. It localises to the chloroplast thylakoid membrane. In terms of biological role, component of the cytochrome b6-f complex, which mediates electron transfer between photosystem II (PSII) and photosystem I (PSI), cyclic electron flow around PSI, and state transitions. This chain is Cytochrome f, found in Aethionema cordifolium (Lebanon stonecress).